An 88-amino-acid polypeptide reads, in one-letter code: Small ribosomal subunit protein bS20 (88 aa).

The disordered stretch occupies residues 1–28; the sequence is MANTSSAKKATRKIARRTAVNKSRRTQM.

In terms of biological role, binds directly to 16S ribosomal RNA. This Rhodopseudomonas palustris (strain ATCC BAA-98 / CGA009) protein is Small ribosomal subunit protein bS20.